The primary structure comprises 392 residues: Adenosine 3'-phospho 5'-phosphosulfate transporter 2 (392 aa).

Residues 11–35 form a disordered region; sequence NINGSASGQQAPTSNSPTLTRKSSS. Transmembrane regions (helical) follow at residues 62–82, 87–107, 136–156, 159–179, 185–205, 212–232, 249–269, 286–306, 314–334, and 338–358; these read CAGV…IFTV, PFGW…GLVE, LVLA…LGYL, PTQV…SILI, GPLD…FTLA, NFNL…AAIG, VVFY…LVTG, FGYG…VLAL, IAAT…FVLF, and FTVQ…LNVY.

The protein belongs to the nucleotide-sugar transporter family. SLC35B subfamily.

The protein resides in the golgi apparatus membrane. In terms of biological role, mediates the transport of adenosine 3'-phospho 5'-phosphosulfate (PAPS), from cytosol into Golgi. PAPS is a universal sulfuryl donor for sulfation events that take place in the Golgi. Essential for viability. Involved in glycosaminoglycan synthesis and the subsequent signaling. May be involved in hh and dpp signaling by controlling the sulfation of heparan sulfate (HS). The sequence is that of Adenosine 3'-phospho 5'-phosphosulfate transporter 2 from Drosophila pseudoobscura pseudoobscura (Fruit fly).